A 151-amino-acid polypeptide reads, in one-letter code: Small ribosomal subunit protein uS13 (151 aa).

It belongs to the universal ribosomal protein uS13 family. As to quaternary structure, part of the 30S ribosomal subunit. Forms a loose heterodimer with protein S19. Forms two bridges to the 50S subunit in the 70S ribosome.

Located at the top of the head of the 30S subunit, it contacts several helices of the 16S rRNA. In the 70S ribosome it contacts the 23S rRNA (bridge B1a) and protein L5 of the 50S subunit (bridge B1b), connecting the 2 subunits; these bridges are implicated in subunit movement. The sequence is that of Small ribosomal subunit protein uS13 from Methanospirillum hungatei JF-1 (strain ATCC 27890 / DSM 864 / NBRC 100397 / JF-1).